The primary structure comprises 420 residues: Calreticulin (420 aa).

The first 25 residues, 1-25 (MAIRKGSSYAVAALLALASVAAVAG), serve as a signal peptide directing secretion. N-linked (GlcNAc...) asparagine glycosylation is present at asparagine 57. An alpha-D-glucoside is bound by residues tyrosine 115, lysine 117, tyrosine 134, and aspartate 141. A run of 7 repeats spans residues 197–208 (KHTGSIYEHWDI), 216–227 (DPEAKKPEDWDD), 233–244 (DPEDKKPEGYDD), 251–262 (DPDAKKPEDWDD), 266–276 (GEWTAPTIPNP), 280–290 (GPWKQKKIKNP), and 294–304 (GKWKAPMIDNP). The interval 197-262 (KHTGSIYEHW…DAKKPEDWDD (66 aa)) is 4 X approximate repeats. Residues 213–258 (KIKDPEAKKPEDWDDKEYIPDPEDKKPEGYDDIPKEIPDPDAKKPE) show a composition bias toward basic and acidic residues. A disordered region spans residues 213–285 (KIKDPEAKKP…PEYKGPWKQK (73 aa)). The interval 266–304 (GEWTAPTIPNPEYKGPWKQKKIKNPNYQGKWKAPMIDNP) is 3 X approximate repeats. Position 324 (glutamate 324) interacts with an alpha-D-glucoside. The span at 355–381 (GKHKEAEKAAFDEAEKKKEEEDAAKGG) shows a compositional bias: basic and acidic residues. The segment at 355–420 (GKHKEAEKAA…DSDDEKHDEL (66 aa)) is disordered. The span at 382–402 (DDEDDDLEDEEDDEKADEDKA) shows a compositional bias: acidic residues. Positions 403-420 (DSDAEDGKDSDDEKHDEL) are enriched in basic and acidic residues. Residues 417 to 420 (HDEL) carry the Prevents secretion from ER motif.

Belongs to the calreticulin family.

The protein localises to the endoplasmic reticulum lumen. Functionally, molecular calcium-binding chaperone promoting folding, oligomeric assembly and quality control in the ER via the calreticulin/calnexin cycle. This lectin may interact transiently with almost all of the monoglucosylated glycoproteins that are synthesized in the ER. This Zea mays (Maize) protein is Calreticulin (CRT).